Here is a 247-residue protein sequence, read N- to C-terminus: tRNA pseudouridine synthase A (247 aa).

Residue D53 is the Nucleophile of the active site. Y112 is a binding site for substrate.

The protein belongs to the tRNA pseudouridine synthase TruA family. In terms of assembly, homodimer.

The catalysed reaction is uridine(38/39/40) in tRNA = pseudouridine(38/39/40) in tRNA. Its function is as follows. Formation of pseudouridine at positions 38, 39 and 40 in the anticodon stem and loop of transfer RNAs. This is tRNA pseudouridine synthase A from Anaplasma marginale (strain Florida).